The primary structure comprises 1327 residues: MPTIFQTPTPNIDITLNNSTQFYYSTPQQTSPLQKQQQQQQQQQQQQQQQQQQQTSPIQQQISQQQQISPLQQLLQKQQQQQQSPVHQIHQQLIQQIIPPKQQEKQQEKIQDELKIQSTTPVINNNINNINNNINTTNNNNKTNERQNNEESNQISTITTTGTTTGTTATIISPNKLDIEQFVKGNEKVSRRTRAHVSLQNLDFEELDAYFDTHVSTIPLEEATSLSQSNHFGFLDTNIYNDEYKQFITNLKSGGFGDINIFEEEDDEDYIPPEEEEDDDEDNINVYNDKNIDYSTNITSKNNSNEDYNSNEDHNSNDENDYNNTANNINNNNIGDESDNNNNNNNNINNNSNKGDDDDDDDDDNNDDDDDDNDISYVDLNNDGENDESSNEMAALVNDYLENEAKEINGQNGFFKLLDLNLGEQFKQVIAPLPLNQITSTIQQQQQNDFILPIENFIGISNSVLVSPIPDFDPNFKPDSKIEKKLSSITLNGTQLNNLYITTPPQQQQQSSSSINSSNTMSSSSSSSSLSKNKLKKKKKEEKRKEEKRKEEKRKEKKRKKRQSITISKFKKNKKKTNGGFSSDSESDSSSDDSDDSDFYYSDIEEGGGGNGNGSGSGVGVVDSDNEEGDSSSDDFSKKKKRKLYHTNNSNNSIENNNNNNNNNNHESTSNSIFTLTLEQIQEVKLQIAQHYQLLIQVYLLMRIQTNPENFNLNLKKKKKIQSSSSSSSSTIKEIDSAEDDEDNYNNNNNNINNDDEDDNNNNNEDDNDDIEKYYSTYRNIVNRKPPTDMVQHNGMIDSVKRMLDQLFNYHQKHVENQIYSKIIFQQMESPSKVFTRSVKKALVPHVTSQLFDSEAIKLYPYLNELIVEDPIPSFKTMEIILSIFKDHFSESYNYRNVKLNQLKFTGGEDLLLLMGVKRFGTFNWRIIQKRYFPNKTDDQLFHRYKNLLSHSSANNQLKQYLNGAKFTKEEEEKLDGAIKIHGLKWDIISRDYLHWKEPAMLKKFYEKREKQVEKKNLFERRQLKKEKRNLERQRKQEQQRLLELEMEQDEIERQKQLEFNSTNNNNNNNNNNNNNNNNNNNNNNNNNNNNNNNNNNNNNNNENSSTNSNNDSGNENNYEFGDNETEILNDNIEISTTIDINNPIIENNSSTSTTRETSPVQMNPCPISSLSITNQQFQLQQDQYQLQQYQFYQQQQQYNQQQYEQQQQQQQQQQQQQQQQQQQQQQQQQQQQQHEQQQNEQQRTNNLSTETIIKSDNLNIVDGILIKWTREEDRIILITVKEKGTVDNEIWKSLSDTKIQDKTPDQIMYRYLQLLELIKRSQFAKQ.

Residues 131–142 (NNNINTTNNNNK) show a composition bias toward low complexity. 4 disordered regions span residues 131 to 153 (NNNI…EESN), 263 to 390 (EEED…DESS), 504 to 668 (PPQQ…NHES), and 717 to 770 (KKKK…DNDD). Acidic residues predominate over residues 263–283 (EEEDDEDYIPPEEEEDDDEDN). The segment covering 322–353 (YNNTANNINNNNIGDESDNNNNNNNNINNNSN) has biased composition (low complexity). Residues 356–374 (DDDDDDDDDNNDDDDDDND) show a composition bias toward acidic residues. Residues 511-532 (SSSSINSSNTMSSSSSSSSLSK) are compositionally biased toward low complexity. The span at 533 to 542 (NKLKKKKKEE) shows a compositional bias: basic residues. The segment covering 543–554 (KRKEEKRKEEKR) has biased composition (basic and acidic residues). The segment covering 555-577 (KEKKRKKRQSITISKFKKNKKKT) has biased composition (basic residues). Over residues 585–606 (SESDSSSDDSDDSDFYYSDIEE) the composition is skewed to acidic residues. Positions 607–619 (GGGGNGNGSGSGV) are enriched in gly residues. Positions 624-633 (SDNEEGDSSS) are enriched in acidic residues. 2 stretches are compositionally biased toward low complexity: residues 646-668 (HTNN…NHES) and 722-732 (QSSSSSSSSTI). The span at 754 to 770 (NDDEDDNNNNNEDDNDD) shows a compositional bias: acidic residues. Residues 897-953 (NVKLNQLKFTGGEDLLLLMGVKRFGTFNWRIIQKRYFPNKTDDQLFHRYKNLLSHSS) form the HTH myb-type domain. A DNA-binding region (H-T-H motif) is located at residues 925–949 (WRIIQKRYFPNKTDDQLFHRYKNLL). Residues 959 to 1010 (KQYLNGAKFTKEEEEKLDGAIKIHGLKWDIISRDYLHWKEPAMLKKFYEKRE) enclose the Myb-like 1 domain. Low complexity-rich tracts occupy residues 1061 to 1118 (NSTN…NENN) and 1144 to 1160 (PIIE…ETSP). 2 disordered regions span residues 1061-1122 (NSTN…YEFG) and 1144-1168 (PIIE…PCPI). Positions 1268–1316 (KWTREEDRIILITVKEKGTVDNEIWKSLSDTKIQDKTPDQIMYRYLQLL) constitute a Myb-like 2 domain.

Its subcellular location is the nucleus. The chain is Myb-like protein O (mybO) from Dictyostelium discoideum (Social amoeba).